Reading from the N-terminus, the 171-residue chain is Co-chaperone protein HscB homolog (171 aa).

Positions 3-75 (SHFALFDLEP…SQRARYLLSL (73 aa)) constitute a J domain.

The protein belongs to the HscB family. In terms of assembly, interacts with HscA and stimulates its ATPase activity.

In terms of biological role, co-chaperone involved in the maturation of iron-sulfur cluster-containing proteins. Seems to help targeting proteins to be folded toward HscA. The chain is Co-chaperone protein HscB homolog from Azotobacter vinelandii.